A 666-amino-acid chain; its full sequence is Chaperone protein HtpG (666 aa).

Residues 1-374 form an a; substrate-binding region; it reads MSELNPVDNQ…SADLPLNVSR (374 aa). A b region spans residues 375-593; it reads ELLQESRDVK…EGELSPQMIQ (219 aa). The interval 594–666 is c; the sequence is MLKQMGQDVP…LRRVNELLMR (73 aa).

It belongs to the heat shock protein 90 family. In terms of assembly, homodimer.

Its subcellular location is the cytoplasm. Molecular chaperone. Has ATPase activity. This chain is Chaperone protein HtpG, found in Psychrobacter cryohalolentis (strain ATCC BAA-1226 / DSM 17306 / VKM B-2378 / K5).